We begin with the raw amino-acid sequence, 137 residues long: Maltose regulon regulatory protein MalI (137 aa).

An HTH lacI-type domain is found at 6–60 (VTITEVAKHAGVSVTTVSMVLGNKGRISPDTIEKVNASVEALGYIRNRAAANLRS). Residues 8–27 (ITEVAKHAGVSVTTVSMVLG) constitute a DNA-binding region (H-T-H motif).

Repressor for the malX and malY genes. The protein is Maltose regulon regulatory protein MalI (malI) of Vibrio furnissii.